The sequence spans 429 residues: Probable beta-1,3-galactosyl-O-glycosyl-glycoprotein beta-1,6-N-acetylglucosaminyltransferase 7 (429 aa).

Over 1 to 8 (MSQLRATK) the chain is Cytoplasmic. Residues 9 to 25 (PGILVCAAIGIFVFLYL) form a helical; Signal-anchor for type II membrane protein membrane-spanning segment. Residues 26–429 (RNPTSEDPEE…ESHLNRRLNP (404 aa)) lie on the Extracellular side of the membrane. 4 disulfides stabilise this stretch: Cys-53-Cys-205, Cys-139-Cys-354, Cys-160-Cys-187, and Cys-363-Cys-394. Asn-87 carries an N-linked (GlcNAc...) asparagine glycan. N-linked (GlcNAc...) asparagine glycosylation occurs at Asn-272.

It belongs to the glycosyltransferase 14 family.

It is found in the golgi apparatus membrane. It functions in the pathway protein modification; protein glycosylation. In terms of biological role, probable glycosyltransferase. The protein is Probable beta-1,3-galactosyl-O-glycosyl-glycoprotein beta-1,6-N-acetylglucosaminyltransferase 7 of Sus scrofa (Pig).